A 479-amino-acid chain; its full sequence is ATP synthase subunit beta (479 aa).

168–175 serves as a coordination point for ATP; the sequence is GGAGVGKT.

Belongs to the ATPase alpha/beta chains family. F-type ATPases have 2 components, CF(1) - the catalytic core - and CF(0) - the membrane proton channel. CF(1) has five subunits: alpha(3), beta(3), gamma(1), delta(1), epsilon(1). CF(0) has three main subunits: a(1), b(2) and c(9-12). The alpha and beta chains form an alternating ring which encloses part of the gamma chain. CF(1) is attached to CF(0) by a central stalk formed by the gamma and epsilon chains, while a peripheral stalk is formed by the delta and b chains.

The protein localises to the cell membrane. It carries out the reaction ATP + H2O + 4 H(+)(in) = ADP + phosphate + 5 H(+)(out). Its function is as follows. Produces ATP from ADP in the presence of a proton gradient across the membrane. The catalytic sites are hosted primarily by the beta subunits. The chain is ATP synthase subunit beta from Frankia casuarinae (strain DSM 45818 / CECT 9043 / HFP020203 / CcI3).